The sequence spans 2465 residues: Serine/threonine-protein kinase TOR (2465 aa).

11 HEAT repeats span residues 184–221, 271–308, 348–389, 549–587, 588–625, 717–755, 761–799, 888–926, 981–1018, 1022–1059, and 1061–1098; these read VHVP…VIEK, SRYR…FLRD, AELV…AMGP, RLVE…FDDF, LAQA…KNPA, QYLP…STGY, NEYP…LDPH, PYLP…IVRQ, MYIL…VFGG, EHMH…TVQV, and THVS…ALGE. The tract at residues 1158-1191 is disordered; sequence DFGGVPSEEADETQRQPRSHQVNDVRLRSAGEAS. An FAT domain is found at 1297-1877; it reads LLGALAEKCR…MYPLLVACKS (581 aa). A PI3K/PI4K catalytic domain is found at 2051–2369; that stretch reads FVPQLIVITS…PPRGAREREL (319 aa). The tract at residues 2057 to 2063 is G-loop; sequence VITSKQR. Residues 2230 to 2238 form a catalytic loop region; sequence GLGDRHPSN. An activation loop region spans residues 2250–2275; sequence HIDFGDCFEASMNREKFPEKVPFRLT. The interval 2401-2431 is disordered; it reads RDFSSGSSLSGAGSSTQHGNEHLASGDTREV. Residues 2404 to 2415 are compositionally biased toward low complexity; sequence SSGSSLSGAGSS. Residues 2433–2465 form the FATC domain; sequence PGLSVKVQVQRLILQATSHENLCQNYVGWCPFW.

The protein belongs to the PI3/PI4-kinase family. In terms of assembly, the target of rapamycin complex 1 (TORC1) is composed of at least RAPTOR, LST8 and TOR.

The enzyme catalyses L-seryl-[protein] + ATP = O-phospho-L-seryl-[protein] + ADP + H(+). It carries out the reaction L-threonyl-[protein] + ATP = O-phospho-L-threonyl-[protein] + ADP + H(+). With respect to regulation, insensitive to inhibition by rapamycin. Component of TORC1 complex, which is an essential cell growth regulator that controls plant development. Acts through the phosphorylation of downstream effectors that are recruited by the binding partner RAPTOR. Acts by activating transcription, protein synthesis and ribosome biogenesis, and inhibiting mRNA degradation and autophagy. The polypeptide is Serine/threonine-protein kinase TOR (Oryza sativa subsp. japonica (Rice)).